We begin with the raw amino-acid sequence, 401 residues long: MAVSMACARPLISVYSEKGETSGKNVTMPAVFKAPIRPDIVNFVHTNLRKNNRQPYAVSKLAGHQTSAESWGTGRAVARIPRVRGGGTHRSGQGAFGNMCRGGRMFAPTKTWRRWHRRVNTTQKRYAVCSALAASALPALIMSKGHRIEEIPEVPLVVEDKVESYKKTKEAVLLLKKLKAWNDIKKVYASQRMRAGKGKMRNRRRIQRRGPCVIYNENNGIIKAFRNIPGITLLNVSKLNLLRLAPGGHVGRFCIWTESAFRKLDDLYGTWRKSAKLKADYNLPMHKMTNTDLTRILKSQEIQRALRAPNKKVKRRELKKNPLKNLRIMMRLNPYAKTARRHAILQQLENIKAKEKKPDDGKPKAKKPLDAKTKMIKLAKAKKRQARAEAKTAEAKTAESK.

Residues 351-373 show a composition bias toward basic and acidic residues; sequence IKAKEKKPDDGKPKAKKPLDAKT. The interval 351-401 is disordered; the sequence is IKAKEKKPDDGKPKAKKPLDAKTKMIKLAKAKKRQARAEAKTAEAKTAESK. The segment covering 374-385 has biased composition (basic residues); sequence KMIKLAKAKKRQ. The span at 386–401 shows a compositional bias: basic and acidic residues; the sequence is ARAEAKTAEAKTAESK.

Belongs to the universal ribosomal protein uL4 family. In terms of assembly, component of the large ribosomal subunit.

It localises to the cytoplasm. Its function is as follows. Component of the large ribosomal subunit. The ribosome is a large ribonucleoprotein complex responsible for the synthesis of proteins in the cell. In Xenopus laevis (African clawed frog), this protein is Large ribosomal subunit protein uL4B (rpl4-b).